The primary structure comprises 203 residues: High frequency lysogenization protein HflD homolog (203 aa).

It belongs to the HflD family.

It localises to the cytoplasm. Its subcellular location is the cell inner membrane. This Histophilus somni (strain 2336) (Haemophilus somnus) protein is High frequency lysogenization protein HflD homolog.